The sequence spans 128 residues: 3-aminoacrylate deaminase RutC (128 aa).

Belongs to the RutC family. Homotrimer.

The enzyme catalyses (Z)-3-aminoacrylate + H2O + H(+) = 3-oxopropanoate + NH4(+). Functionally, involved in pyrimidine catabolism. Catalyzes the deamination of 3-aminoacrylate to malonic semialdehyde, a reaction that can also occur spontaneously. RutC may facilitate the reaction and modulate the metabolic fitness, rather than catalyzing essential functions. This is 3-aminoacrylate deaminase RutC from Escherichia coli O157:H7.